The following is a 396-amino-acid chain: L-lactate dehydrogenase (396 aa).

The FMN hydroxy acid dehydrogenase domain occupies 1–380 (MIISAASDYR…SGDSLVQELG (380 aa)). Y24 lines the substrate pocket. 2 residues coordinate FMN: S106 and Q127. Residue Y129 coordinates substrate. T155 is an FMN binding site. Position 164 (R164) interacts with substrate. Position 251 (K251) interacts with FMN. H275 (proton acceptor) is an active-site residue. Position 278 (R278) interacts with substrate. An FMN-binding site is contributed by 306-330 (DSGIRNGLDVVRMIALGADTVLLGR).

Belongs to the FMN-dependent alpha-hydroxy acid dehydrogenase family. It depends on FMN as a cofactor.

The protein resides in the cell inner membrane. The enzyme catalyses (S)-lactate + A = pyruvate + AH2. In terms of biological role, catalyzes the conversion of L-lactate to pyruvate. Is coupled to the respiratory chain. The chain is L-lactate dehydrogenase from Salmonella paratyphi B (strain ATCC BAA-1250 / SPB7).